The following is a 290-amino-acid chain: Flap endonuclease Xni (290 aa).

Position 125 (Asp125) interacts with Mg(2+). Residues 181–275 form the 5'-3' exonuclease domain; it reads VKTSQLIDFW…DIRLTTSSSA (95 aa). Residues Leu192, Val203, and Ile206 each contribute to the K(+) site. Positions 205–210 are interaction with DNA; that stretch reads GIGQVT.

Belongs to the Xni family. Mg(2+) serves as cofactor. The cofactor is K(+).

Functionally, has flap endonuclease activity. During DNA replication, flap endonucleases cleave the 5'-overhanging flap structure that is generated by displacement synthesis when DNA polymerase encounters the 5'-end of a downstream Okazaki fragment. The chain is Flap endonuclease Xni from Colwellia psychrerythraea (strain 34H / ATCC BAA-681) (Vibrio psychroerythus).